A 248-amino-acid chain; its full sequence is Triosephosphate isomerase (248 aa).

Substrate contacts are provided by N10 and K12. H95 (electrophile) is an active-site residue. Residue E165 is the Proton acceptor of the active site.

It belongs to the triosephosphate isomerase family. In terms of assembly, homodimer.

The catalysed reaction is D-glyceraldehyde 3-phosphate = dihydroxyacetone phosphate. The protein operates within carbohydrate biosynthesis; gluconeogenesis. Its pathway is carbohydrate degradation; glycolysis; D-glyceraldehyde 3-phosphate from glycerone phosphate: step 1/1. The protein is Triosephosphate isomerase (TPI1) of Debaryomyces hansenii (strain ATCC 36239 / CBS 767 / BCRC 21394 / JCM 1990 / NBRC 0083 / IGC 2968) (Yeast).